We begin with the raw amino-acid sequence, 387 residues long: 3-ketoacyl-CoA thiolase FadA (387 aa).

Catalysis depends on Cys91, which acts as the Acyl-thioester intermediate. Active-site proton acceptor residues include His343 and Cys373.

The protein belongs to the thiolase-like superfamily. Thiolase family. In terms of assembly, heterotetramer of two alpha chains (FadB) and two beta chains (FadA).

The protein localises to the cytoplasm. The enzyme catalyses an acyl-CoA + acetyl-CoA = a 3-oxoacyl-CoA + CoA. Its pathway is lipid metabolism; fatty acid beta-oxidation. In terms of biological role, catalyzes the final step of fatty acid oxidation in which acetyl-CoA is released and the CoA ester of a fatty acid two carbons shorter is formed. Involved in the aerobic and anaerobic degradation of long-chain fatty acids. In Escherichia coli (strain K12), this protein is 3-ketoacyl-CoA thiolase FadA (fadA).